The chain runs to 89 residues: Small ribosomal subunit protein uS15 (89 aa).

The protein belongs to the universal ribosomal protein uS15 family. As to quaternary structure, part of the 30S ribosomal subunit. Forms a bridge to the 50S subunit in the 70S ribosome, contacting the 23S rRNA.

One of the primary rRNA binding proteins, it binds directly to 16S rRNA where it helps nucleate assembly of the platform of the 30S subunit by binding and bridging several RNA helices of the 16S rRNA. Its function is as follows. Forms an intersubunit bridge (bridge B4) with the 23S rRNA of the 50S subunit in the ribosome. This chain is Small ribosomal subunit protein uS15, found in Nostoc sp. (strain PCC 7120 / SAG 25.82 / UTEX 2576).